Reading from the N-terminus, the 186-residue chain is Elongation factor P (186 aa).

This sequence belongs to the elongation factor P family.

The protein localises to the cytoplasm. It functions in the pathway protein biosynthesis; polypeptide chain elongation. Its function is as follows. Involved in peptide bond synthesis. Stimulates efficient translation and peptide-bond synthesis on native or reconstituted 70S ribosomes in vitro. Probably functions indirectly by altering the affinity of the ribosome for aminoacyl-tRNA, thus increasing their reactivity as acceptors for peptidyl transferase. The polypeptide is Elongation factor P (Prochlorococcus marinus (strain MIT 9313)).